We begin with the raw amino-acid sequence, 672 residues long: MAKSDGDDPLRPASPRLRSSRRHSLRYSAYTGGPDPLAPPVDLRDALEQIGQDVMAGASPRRALSELLRRGTRNLTGADRLAAEVNRRRRELLRRNNLDGTLQEIKKLLDEAVLAERKELARALDDDARFAELQLDALPASPAKAVQELAEYRWRSGQAREKYEQIKDLLGRELLDQRFAGMKQALAGATDDDRRRVTEMLDDLNDLLDKHARGEDTQRDFDEFMTKHGEFFPENPRNVEELLDSLAKRAAAAQRFRNSLSQEQRDELDALAQQAFGSPALMRALDRLDAHLQAARPGEDWTGSQQFSGDNPFGMGEGTQALADIAELEQLAEQLSQSYPGASMDDVDLDALARQLGDQAAVDARTLAELERALVNQGFLDRGSDGQWRLSPKAMRRLGETALRDVAQQLSGRHGERDHRRAGAAGELTGATRPWQFGDTEPWHVARTLTNAVLRQAAAVHDRIRITVEDVEVAETETRTQAAVALLVDTSFSMVMENRWLPMKRTALALHHLVCTRFRSDALQIIAFGRYARTVTAAELTGLAGVYEQGTNLHHALALAGRHLRRHAGAQPVVLVVTDGEPTAHLEDFDGDGTSVFFDYPPHPRTIAHTVRGFDDMARLGAQVTIFRLGSDPGLARFIDQVARRVQGRVVVPDLDGLGAAVVGDYLRFRRR.

Residues 1 to 10 are compositionally biased toward basic and acidic residues; the sequence is MAKSDGDDPL. The segment at 1-41 is disordered; the sequence is MAKSDGDDPLRPASPRLRSSRRHSLRYSAYTGGPDPLAPPV.

This is an uncharacterized protein from Mycobacterium bovis (strain ATCC BAA-935 / AF2122/97).